A 923-amino-acid chain; its full sequence is Neuropilin-1 (923 aa).

The N-terminal stretch at 1-21 (MERGLPLLCATLALALALAGA) is a signal peptide. The Extracellular portion of the chain corresponds to 22 to 856 (FRSDKCGGTI…PGNVLKTLDP (835 aa)). Intrachain disulfides connect C27–C54, C82–C104, and C147–C173. 2 CUB domains span residues 27 to 141 (CGGT…YEIF) and 147 to 265 (CSQN…YSVL). N-linked (GlcNAc...) asparagine glycosylation is present at N150. The Ca(2+) site is built by E195, D209, and D250. C206 and C228 are disulfide-bonded. 3 N-linked (GlcNAc...) asparagine glycosylation sites follow: N261, N300, and N522. Disulfide bonds link C275–C424 and C431–C583. F5/8 type C domains are found at residues 275–424 (CMEA…VYGC) and 431–583 (CSGM…LLGC). An O-linked (Xyl...) (chondroitin sulfate) serine; alternate glycan is attached at S612. S612 is a glycosylation site (O-linked (Xyl...) (heparan sulfate) serine; alternate). The MAM domain maps to 645-811 (TYGFNCEFGW…NHISQEDCAK (167 aa)). Residues 820 to 845 (TEIKIDETGSTPGYEGEGEGDKNISR) are disordered. An O-linked (Xyl...) (chondroitin sulfate) serine glycan is attached at S829. N-linked (GlcNAc...) asparagine glycosylation is present at N842. A helical transmembrane segment spans residues 857–879 (ILITIIAMSALGVLLGAVCGVVL). Over 880 to 923 (YCACWHNGMSERNLSALENYNFELVDGVKLKKDKLNPQSNYSEA) the chain is Cytoplasmic. S894 carries the phosphoserine modification.

This sequence belongs to the neuropilin family. In terms of assembly, homodimer, and heterodimer with NRP2. Binds PLXNB1. Interacts with FER. Interacts with VEGFA. Interacts with ABCB8/MITOSUR in mitochondria. As to expression, nervous system.

It localises to the mitochondrion membrane. The protein resides in the cell membrane. Its subcellular location is the cytoplasm. Receptor involved in the development of the cardiovascular system, in angiogenesis, in the formation of certain neuronal circuits and in organogenesis outside the nervous system. Mediates the chemorepulsant activity of semaphorins. Recognizes a C-end rule (CendR) motif R/KXXR/K on its ligands which causes cellular internalization and vascular leakage. Binds to semaphorin 3A (SEMA3A), the PLGF-2 isoform of PGF, the VEGF165 isoform of VEGFA and VEGFB. Coexpression with KDR results in increased VEGF165 binding to KDR as well as increased chemotaxis. Regulates VEGF-induced angiogenesis. Binding to VEGFA initiates a signaling pathway needed for motor neuron axon guidance and cell body migration, including for the caudal migration of facial motor neurons from rhombomere 4 to rhombomere 6 during embryonic development. Regulates mitochondrial iron transport via interaction with ABCB8/MITOSUR. This is Neuropilin-1 from Mus musculus (Mouse).